The primary structure comprises 154 residues: 6,7-dimethyl-8-ribityllumazine synthase (154 aa).

5-amino-6-(D-ribitylamino)uracil is bound by residues F22, 56 to 58, and 80 to 82; these read SFE and AVI. 85 to 86 is a (2S)-2-hydroxy-3-oxobutyl phosphate binding site; it reads ST. The Proton donor role is filled by H88. 5-amino-6-(D-ribitylamino)uracil is bound at residue Y113. R127 contacts (2S)-2-hydroxy-3-oxobutyl phosphate.

This sequence belongs to the DMRL synthase family. As to quaternary structure, forms an icosahedral capsid composed of 60 subunits, arranged as a dodecamer of pentamers.

The catalysed reaction is (2S)-2-hydroxy-3-oxobutyl phosphate + 5-amino-6-(D-ribitylamino)uracil = 6,7-dimethyl-8-(1-D-ribityl)lumazine + phosphate + 2 H2O + H(+). It functions in the pathway cofactor biosynthesis; riboflavin biosynthesis; riboflavin from 2-hydroxy-3-oxobutyl phosphate and 5-amino-6-(D-ribitylamino)uracil: step 1/2. Functionally, catalyzes the formation of 6,7-dimethyl-8-ribityllumazine by condensation of 5-amino-6-(D-ribitylamino)uracil with 3,4-dihydroxy-2-butanone 4-phosphate. This is the penultimate step in the biosynthesis of riboflavin. This Sulfurihydrogenibium sp. (strain YO3AOP1) protein is 6,7-dimethyl-8-ribityllumazine synthase.